Here is a 134-residue protein sequence, read N- to C-terminus: Larval cuticle protein A3A (134 aa).

Residues 23 to 26 (AAPV) form repeat 1. A disordered region spans residues 38–80 (DPHPQYSYGYDIQDGLTGDSKNQQETRDGDVVQGSYSLVDPDG). The region spanning 40–106 (HPQYSYGYDI…AVVHREPLVA (67 aa)) is the Chitin-binding type R&amp;R domain. Repeat unit 2 spans residues 111-114 (AAPA).

In terms of biological role, component of the cuticle of the larva of Tenebrio molitor. The polypeptide is Larval cuticle protein A3A (Tenebrio molitor (Yellow mealworm beetle)).